The primary structure comprises 318 residues: MQNKNNYNWLKEWVIRSFLLLTLLTWPSVSNAYPIFAQQGYENPREATGRIVCANCHLAKKPVDIEVPQSVLPDTVFEAIVKIPYDMQVKQVLANGKKGGLNVGAVPILPQGFELAPSDRIPTEIKEKIGNLSFQNYSPDKKNIIIVGPVPGKKYSEIVFPILSPDPASNKESNFLKYPIYVGGNRGRGQIYPDGSRSNNTVYNASATGKVIKIFRKEKKGGYEITIEKTSDGRQVVDIVPPGPELIISEGEFLKVDQPLTNNPNVGGFGQGDAEIVLQDPLRIQGLLLFFASVVLAQIFLVLKKKQFEKVQLAEMNF.

The first 32 residues, 1-32, serve as a signal peptide directing secretion; the sequence is MQNKNNYNWLKEWVIRSFLLLTLLTWPSVSNA. Heme-binding residues include Tyr-33, Cys-53, Cys-56, and His-57. The helical transmembrane segment at 284–304 threads the bilayer; it reads IQGLLLFFASVVLAQIFLVLK.

It belongs to the cytochrome f family. As to quaternary structure, the 4 large subunits of the cytochrome b6-f complex are cytochrome b6, subunit IV (17 kDa polypeptide, petD), cytochrome f and the Rieske protein, while the 4 small subunits are PetG, PetL, PetM and PetN. The complex functions as a dimer. Heme serves as cofactor.

It localises to the plastid. The protein resides in the chloroplast thylakoid membrane. Component of the cytochrome b6-f complex, which mediates electron transfer between photosystem II (PSII) and photosystem I (PSI), cyclic electron flow around PSI, and state transitions. The polypeptide is Cytochrome f (Angiopteris evecta (Mule's foot fern)).